The chain runs to 568 residues: Estrogen receptor beta (568 aa).

Residues 1 to 177 (MHQQSPVDDV…SLRGKADMHY (177 aa)) are modulating. 2 NR C4-type zinc fingers span residues 178-198 (CAVCSDYASGYHYGVWSCEGC) and 214-238 (CPATNQCTIDKNRRKSCQACRLRKC). Residues 178 to 243 (CAVCSDYASG…RLRKCYEVGM (66 aa)) constitute a DNA-binding region (nuclear receptor). One can recognise an NR LBD domain in the interval 300-536 (TPEELIARIM…DLLLEMLDAH (237 aa)).

It belongs to the nuclear hormone receptor family. NR3 subfamily. As to quaternary structure, binds DNA as a homodimer. Can form a heterodimer with ER-alpha.

The protein resides in the nucleus. In terms of biological role, binds estrogens with an affinity similar to that of ER-alpha, and activates expression of reporter genes containing estrogen response elements (ERE) in an estrogen-dependent manner. This chain is Estrogen receptor beta (esr2), found in Oncorhynchus mykiss (Rainbow trout).